We begin with the raw amino-acid sequence, 816 residues long: Transcription factor qa-1f (816 aa).

A DNA-binding region (zn(2)-C6 fungal-type) is located at residues 76 to 103 (CDQCRAAREKCDGIQPACFPCVSQGRSC). A compositionally biased stretch (polar residues) spans 184 to 202 (SGQAAQDPSEDGQSPSEDI). The segment at 184–235 (SGQAAQDPSEDGQSPSEDINVQDAGAKTSDFPHAPHLTFSAPKSSTAETRTL) is disordered.

It localises to the nucleus. Transcription activator; part of the qa gene cluster that mediates the catabolism of quinic acid (QA) and as such, allows the use of QA as a sole carbon source. Activates the expression of qa cluster genes by binding to a 16 base-pair consensus sequence 5'-GGRTAARYRYTTAYCC-3' present in the promoters of the target genes. Regulates its own expression. May regulate the expression of many other genes inclusing genes with products in 8 mutually connected metabolic pathways: (1) starch and sucrose metabolism; (2) glycolysis/glucanogenesis; (3) TCA Cycle; (4) butanoate metabolism; (5) pyruvate metabolism; (6) aromatic amino acid and QA metabolism; (7) valine, leucine, and isoleucine degradation; and (8) transport of sugars and amino acids. In Neurospora crassa (strain ATCC 24698 / 74-OR23-1A / CBS 708.71 / DSM 1257 / FGSC 987), this protein is Transcription factor qa-1f.